A 237-amino-acid polypeptide reads, in one-letter code: High-affinity branched-chain amino acid transport ATP-binding protein LivF (237 aa).

One can recognise an ABC transporter domain in the interval 6 to 237; that stretch reads LSFDKVSAHY…EAVRSAYLGG (232 aa). 38–45 is an ATP binding site; sequence GANGAGKT.

Belongs to the ABC transporter superfamily.

Its function is as follows. Component of the leucine-specific transport system. This is High-affinity branched-chain amino acid transport ATP-binding protein LivF (livF) from Escherichia coli (strain K12).